A 220-amino-acid polypeptide reads, in one-letter code: Octanoyltransferase (220 aa).

The BPL/LPL catalytic domain occupies 31–217 (ENTPDEIWLV…HFAEILGYNA (187 aa)). Substrate is bound by residues 70 to 77 (RGGQITYH), 146 to 148 (SLG), and 159 to 161 (GLA). Catalysis depends on Cys177, which acts as the Acyl-thioester intermediate.

This sequence belongs to the LipB family.

Its subcellular location is the cytoplasm. It carries out the reaction octanoyl-[ACP] + L-lysyl-[protein] = N(6)-octanoyl-L-lysyl-[protein] + holo-[ACP] + H(+). The protein operates within protein modification; protein lipoylation via endogenous pathway; protein N(6)-(lipoyl)lysine from octanoyl-[acyl-carrier-protein]: step 1/2. Its function is as follows. Catalyzes the transfer of endogenously produced octanoic acid from octanoyl-acyl-carrier-protein onto the lipoyl domains of lipoate-dependent enzymes. Lipoyl-ACP can also act as a substrate although octanoyl-ACP is likely to be the physiological substrate. The polypeptide is Octanoyltransferase (Actinobacillus succinogenes (strain ATCC 55618 / DSM 22257 / CCUG 43843 / 130Z)).